Reading from the N-terminus, the 338-residue chain is Holliday junction branch migration complex subunit RuvB (338 aa).

The segment at glutamate 4 to tyrosine 185 is large ATPase domain (RuvB-L). ATP contacts are provided by residues leucine 24, arginine 25, glycine 66, lysine 69, threonine 70, threonine 71, glutamate 132–phenylalanine 134, arginine 175, tyrosine 185, and arginine 222. Threonine 70 serves as a coordination point for Mg(2+). Positions proline 186–histidine 256 are small ATPAse domain (RuvB-S). The interval alanine 259–serine 338 is head domain (RuvB-H). 2 residues coordinate DNA: arginine 314 and arginine 319.

It belongs to the RuvB family. Homohexamer. Forms an RuvA(8)-RuvB(12)-Holliday junction (HJ) complex. HJ DNA is sandwiched between 2 RuvA tetramers; dsDNA enters through RuvA and exits via RuvB. An RuvB hexamer assembles on each DNA strand where it exits the tetramer. Each RuvB hexamer is contacted by two RuvA subunits (via domain III) on 2 adjacent RuvB subunits; this complex drives branch migration. In the full resolvosome a probable DNA-RuvA(4)-RuvB(12)-RuvC(2) complex forms which resolves the HJ.

It is found in the cytoplasm. The catalysed reaction is ATP + H2O = ADP + phosphate + H(+). The RuvA-RuvB-RuvC complex processes Holliday junction (HJ) DNA during genetic recombination and DNA repair, while the RuvA-RuvB complex plays an important role in the rescue of blocked DNA replication forks via replication fork reversal (RFR). RuvA specifically binds to HJ cruciform DNA, conferring on it an open structure. The RuvB hexamer acts as an ATP-dependent pump, pulling dsDNA into and through the RuvAB complex. RuvB forms 2 homohexamers on either side of HJ DNA bound by 1 or 2 RuvA tetramers; 4 subunits per hexamer contact DNA at a time. Coordinated motions by a converter formed by DNA-disengaged RuvB subunits stimulates ATP hydrolysis and nucleotide exchange. Immobilization of the converter enables RuvB to convert the ATP-contained energy into a lever motion, pulling 2 nucleotides of DNA out of the RuvA tetramer per ATP hydrolyzed, thus driving DNA branch migration. The RuvB motors rotate together with the DNA substrate, which together with the progressing nucleotide cycle form the mechanistic basis for DNA recombination by continuous HJ branch migration. Branch migration allows RuvC to scan DNA until it finds its consensus sequence, where it cleaves and resolves cruciform DNA. In Oenococcus oeni (strain ATCC BAA-331 / PSU-1), this protein is Holliday junction branch migration complex subunit RuvB.